The sequence spans 295 residues: Pyridoxal 5'-phosphate synthase subunit PdxS (295 aa).

Asp25 is a D-ribose 5-phosphate binding site. Lys82 serves as the catalytic Schiff-base intermediate with D-ribose 5-phosphate. Gly154 lines the D-ribose 5-phosphate pocket. Residue Arg166 coordinates D-glyceraldehyde 3-phosphate. D-ribose 5-phosphate contacts are provided by residues Gly215 and 236-237; that span reads GS.

It belongs to the PdxS/SNZ family. As to quaternary structure, in the presence of PdxT, forms a dodecamer of heterodimers.

The enzyme catalyses aldehydo-D-ribose 5-phosphate + D-glyceraldehyde 3-phosphate + L-glutamine = pyridoxal 5'-phosphate + L-glutamate + phosphate + 3 H2O + H(+). The protein operates within cofactor biosynthesis; pyridoxal 5'-phosphate biosynthesis. Functionally, catalyzes the formation of pyridoxal 5'-phosphate from ribose 5-phosphate (RBP), glyceraldehyde 3-phosphate (G3P) and ammonia. The ammonia is provided by the PdxT subunit. Can also use ribulose 5-phosphate and dihydroxyacetone phosphate as substrates, resulting from enzyme-catalyzed isomerization of RBP and G3P, respectively. This is Pyridoxal 5'-phosphate synthase subunit PdxS from Bacillus cereus (strain G9842).